We begin with the raw amino-acid sequence, 223 residues long: Endonuclease V (223 aa).

Mg(2+) is bound by residues Asp-45 and Asp-113.

It belongs to the endonuclease V family. The cofactor is Mg(2+).

Its subcellular location is the cytoplasm. It catalyses the reaction Endonucleolytic cleavage at apurinic or apyrimidinic sites to products with a 5'-phosphate.. In terms of biological role, DNA repair enzyme involved in the repair of deaminated bases. Selectively cleaves double-stranded DNA at the second phosphodiester bond 3' to a deoxyinosine leaving behind the intact lesion on the nicked DNA. In Dehalococcoides mccartyi (strain CBDB1), this protein is Endonuclease V.